The chain runs to 536 residues: 2-isopropylmalate synthase (536 aa).

Positions 8-273 (VLIFDTTLRD…FFGRDPESPT (266 aa)) constitute a Pyruvate carboxyltransferase domain. Mn(2+) contacts are provided by D17, H208, H210, and N244. The interval 408-536 (QLQLVQVSCG…PQHDLIKANL (129 aa)) is regulatory domain.

The protein belongs to the alpha-IPM synthase/homocitrate synthase family. LeuA type 1 subfamily. As to quaternary structure, homodimer. Mn(2+) serves as cofactor.

The protein resides in the cytoplasm. The enzyme catalyses 3-methyl-2-oxobutanoate + acetyl-CoA + H2O = (2S)-2-isopropylmalate + CoA + H(+). It participates in amino-acid biosynthesis; L-leucine biosynthesis; L-leucine from 3-methyl-2-oxobutanoate: step 1/4. In terms of biological role, catalyzes the condensation of the acetyl group of acetyl-CoA with 3-methyl-2-oxobutanoate (2-ketoisovalerate) to form 3-carboxy-3-hydroxy-4-methylpentanoate (2-isopropylmalate). The protein is 2-isopropylmalate synthase of Prochlorococcus marinus (strain MIT 9211).